Reading from the N-terminus, the 453-residue chain is Phosphoglucosamine mutase (453 aa).

Ser102 functions as the Phosphoserine intermediate in the catalytic mechanism. Ser102, Asp244, Asp246, and Asp248 together coordinate Mg(2+). The residue at position 102 (Ser102) is a Phosphoserine.

The protein belongs to the phosphohexose mutase family. The cofactor is Mg(2+). Post-translationally, activated by phosphorylation.

The enzyme catalyses alpha-D-glucosamine 1-phosphate = D-glucosamine 6-phosphate. Its function is as follows. Catalyzes the conversion of glucosamine-6-phosphate to glucosamine-1-phosphate. The protein is Phosphoglucosamine mutase of Pelobacter propionicus (strain DSM 2379 / NBRC 103807 / OttBd1).